We begin with the raw amino-acid sequence, 118 residues long: NADH dehydrogenase [ubiquinone] iron-sulfur protein 5-A (118 aa).

A CHCH domain is found at 46 to 87 (KGRCYDFWMDFSECMSHCREPKDCTLLREDYLECLHHSKEFQ). 2 short sequence motifs (cx9C motif) span residues 49–59 (CYDFWMDFSEC) and 69–79 (CTLLREDYLEC). 2 disulfide bridges follow: Cys-49–Cys-79 and Cys-59–Cys-69. A disordered region spans residues 98–118 (RKLRAASRKGEEAGDGTHNHH).

It belongs to the complex I NDUFS5 subunit family. As to quaternary structure, complex I is composed of at least 49 different subunits. This is a component of the iron-sulfur (IP) fragment of the enzyme.

Its subcellular location is the mitochondrion. It localises to the mitochondrion inner membrane. The protein resides in the mitochondrion intermembrane space. Functionally, accessory subunit of the mitochondrial membrane respiratory chain NADH dehydrogenase (Complex I), that is believed not to be involved in catalysis. Complex I functions in the transfer of electrons from NADH to the respiratory chain. The immediate electron acceptor for the enzyme is believed to be ubiquinone. This Arabidopsis thaliana (Mouse-ear cress) protein is NADH dehydrogenase [ubiquinone] iron-sulfur protein 5-A.